Reading from the N-terminus, the 441-residue chain is MCCALGPGGEPSCKDDRVRHDDVFRLNEPRRVAVLAVHTSPLAQPGTGDAGGMNVYVLQTALHLARRGIEVEIFTRATASADPPVQRVAPGVLVRNVVAGPFEGLDKYDLPTQLCAFAAGVLRAEASHEPGYYDIVHSHYWLSGQVGWLARDRWAVPLVHTAHTLAAVKNAALAQGDSPEPPLRTVGEQQVVDEADRLIVNTDDEARQLISIHHADPARIDVVHPGVDLDVFRPGDRRAARAALGLPLDKDIVAFVGRIQPLKAPDIVLRAAAKLPGVRIVVAGGPSGTGLASPDGLARLADELGISARVTFLPPQSRPNLATLFQAANLVAVPSYSESFGLVALEAQACGTPVAAAAVGGLPVAVRDGVTGTLVAGHDVDHWADALAGLLRAPAPAAAAMSRAAAAHAATFSWDHTTDALLASYRRAIREYTTERRGVGA.

H38 lines the 1D-myo-inositol 3-phosphate pocket. UDP-N-acetyl-alpha-D-glucosamine-binding positions include Q44 to P45 and G52. 1D-myo-inositol 3-phosphate is bound by residues D49–N54, K107, Y140, T164, and R184. Positions 258, 263, and 316 each coordinate UDP-N-acetyl-alpha-D-glucosamine. Mg(2+) contacts are provided by F325, Q326, and A328. 2 residues coordinate UDP-N-acetyl-alpha-D-glucosamine: E338 and E346. T352 serves as a coordination point for Mg(2+).

Belongs to the glycosyltransferase group 1 family. MshA subfamily. As to quaternary structure, homodimer.

It catalyses the reaction 1D-myo-inositol 3-phosphate + UDP-N-acetyl-alpha-D-glucosamine = 1D-myo-inositol 2-acetamido-2-deoxy-alpha-D-glucopyranoside 3-phosphate + UDP + H(+). In terms of biological role, catalyzes the transfer of a N-acetyl-glucosamine moiety to 1D-myo-inositol 3-phosphate to produce 1D-myo-inositol 2-acetamido-2-deoxy-glucopyranoside 3-phosphate in the mycothiol biosynthesis pathway. The chain is D-inositol 3-phosphate glycosyltransferase from Mycolicibacterium paratuberculosis (strain ATCC BAA-968 / K-10) (Mycobacterium paratuberculosis).